The sequence spans 500 residues: Galactose/methyl galactoside import ATP-binding protein MglA (500 aa).

2 consecutive ABC transporter domains span residues 8–243 and 257–500; these read LEME…VGRD and EMIL…AKYL. 40-47 contributes to the ATP binding site; sequence GENGAGKS.

Belongs to the ABC transporter superfamily. Galactose/methyl galactoside importer (TC 3.A.1.2.3) family. As to quaternary structure, the complex is composed of one ATP-binding protein (MglA), two transmembrane proteins (MglC) and a solute-binding protein (MglB).

The protein resides in the cell inner membrane. The catalysed reaction is D-galactose(out) + ATP + H2O = D-galactose(in) + ADP + phosphate + H(+). It carries out the reaction methyl beta-D-galactoside(out) + ATP + H2O = methyl beta-D-galactoside(in) + ADP + phosphate + H(+). Functionally, part of the ABC transporter complex MglABC involved in galactose/methyl galactoside import. Responsible for energy coupling to the transport system. The polypeptide is Galactose/methyl galactoside import ATP-binding protein MglA (Fusobacterium nucleatum subsp. nucleatum (strain ATCC 25586 / DSM 15643 / BCRC 10681 / CIP 101130 / JCM 8532 / KCTC 2640 / LMG 13131 / VPI 4355)).